The sequence spans 211 residues: Thiamine-phosphate synthase (211 aa).

Residues 37–41 and asparagine 69 contribute to the 4-amino-2-methyl-5-(diphosphooxymethyl)pyrimidine site; that span reads QLRIK. Positions 70 and 89 each coordinate Mg(2+). 4-amino-2-methyl-5-(diphosphooxymethyl)pyrimidine is bound at residue serine 108. A 2-[(2R,5Z)-2-carboxy-4-methylthiazol-5(2H)-ylidene]ethyl phosphate-binding site is contributed by 134 to 136; the sequence is TQT. Lysine 137 contributes to the 4-amino-2-methyl-5-(diphosphooxymethyl)pyrimidine binding site. 2-[(2R,5Z)-2-carboxy-4-methylthiazol-5(2H)-ylidene]ethyl phosphate is bound by residues glycine 166 and 186 to 187; that span reads VS.

This sequence belongs to the thiamine-phosphate synthase family. Mg(2+) is required as a cofactor.

The catalysed reaction is 2-[(2R,5Z)-2-carboxy-4-methylthiazol-5(2H)-ylidene]ethyl phosphate + 4-amino-2-methyl-5-(diphosphooxymethyl)pyrimidine + 2 H(+) = thiamine phosphate + CO2 + diphosphate. The enzyme catalyses 2-(2-carboxy-4-methylthiazol-5-yl)ethyl phosphate + 4-amino-2-methyl-5-(diphosphooxymethyl)pyrimidine + 2 H(+) = thiamine phosphate + CO2 + diphosphate. It catalyses the reaction 4-methyl-5-(2-phosphooxyethyl)-thiazole + 4-amino-2-methyl-5-(diphosphooxymethyl)pyrimidine + H(+) = thiamine phosphate + diphosphate. Its pathway is cofactor biosynthesis; thiamine diphosphate biosynthesis; thiamine phosphate from 4-amino-2-methyl-5-diphosphomethylpyrimidine and 4-methyl-5-(2-phosphoethyl)-thiazole: step 1/1. In terms of biological role, condenses 4-methyl-5-(beta-hydroxyethyl)thiazole monophosphate (THZ-P) and 2-methyl-4-amino-5-hydroxymethyl pyrimidine pyrophosphate (HMP-PP) to form thiamine monophosphate (TMP). In Salmonella choleraesuis (strain SC-B67), this protein is Thiamine-phosphate synthase.